We begin with the raw amino-acid sequence, 529 residues long: Bifunctional purine biosynthesis protein PurH (529 aa).

The MGS-like domain maps to 2–149 (TDLSPVRRAL…KNHAFVNVVV (148 aa)).

It belongs to the PurH family.

It carries out the reaction (6R)-10-formyltetrahydrofolate + 5-amino-1-(5-phospho-beta-D-ribosyl)imidazole-4-carboxamide = 5-formamido-1-(5-phospho-D-ribosyl)imidazole-4-carboxamide + (6S)-5,6,7,8-tetrahydrofolate. The enzyme catalyses IMP + H2O = 5-formamido-1-(5-phospho-D-ribosyl)imidazole-4-carboxamide. It participates in purine metabolism; IMP biosynthesis via de novo pathway; 5-formamido-1-(5-phospho-D-ribosyl)imidazole-4-carboxamide from 5-amino-1-(5-phospho-D-ribosyl)imidazole-4-carboxamide (10-formyl THF route): step 1/1. Its pathway is purine metabolism; IMP biosynthesis via de novo pathway; IMP from 5-formamido-1-(5-phospho-D-ribosyl)imidazole-4-carboxamide: step 1/1. This Ruegeria pomeroyi (strain ATCC 700808 / DSM 15171 / DSS-3) (Silicibacter pomeroyi) protein is Bifunctional purine biosynthesis protein PurH.